The chain runs to 359 residues: Photosystem II protein D1 2 (359 aa).

3 helical membrane-spanning segments follow: residues 29-46 (YVGWFGVLMIPTLLAATT), 118-133 (HFLIGIYAYMGREWEL), and 142-156 (WICVAYSAPVAAASA). A chlorophyll a-binding site is contributed by His118. Residue Tyr126 participates in pheophytin a binding. [CaMn4O5] cluster-binding residues include Asp170 and Glu189. Residues 197 to 218 (FHMLGVAGVFGGSLFSAMHGSL) form a helical membrane-spanning segment. His198 serves as a coordination point for chlorophyll a. Residues His215 and 264–265 (SF) each bind a quinone. His215 contacts Fe cation. His272 serves as a coordination point for Fe cation. A helical membrane pass occupies residues 274–288 (FLAAWPVVGIWFTAL). His332, Glu333, Asp342, and Ala344 together coordinate [CaMn4O5] cluster. The propeptide occupies 345-359 (AAESTPVALQAPAIG).

Belongs to the reaction center PufL/M/PsbA/D family. In terms of assembly, PSII is composed of 1 copy each of membrane proteins PsbA, PsbB, PsbC, PsbD, PsbE, PsbF, PsbH, PsbI, PsbJ, PsbK, PsbL, PsbM, PsbT, PsbX, PsbY, PsbZ, Psb30/Ycf12, peripheral proteins PsbO, CyanoQ (PsbQ), PsbU, PsbV and a large number of cofactors. It forms dimeric complexes. The D1/D2 heterodimer binds P680, chlorophylls that are the primary electron donor of PSII, and subsequent electron acceptors. It shares a non-heme iron and each subunit binds pheophytin, quinone, additional chlorophylls, carotenoids and lipids. D1 provides most of the ligands for the Mn4-Ca-O5 cluster of the oxygen-evolving complex (OEC). There is also a Cl(-1) ion associated with D1 and D2, which is required for oxygen evolution. The PSII complex binds additional chlorophylls, carotenoids and specific lipids. serves as cofactor. Tyr-161 forms a radical intermediate that is referred to as redox-active TyrZ, YZ or Y-Z. Post-translationally, C-terminally processed by CtpA; processing is essential to allow assembly of the oxygen-evolving complex and thus photosynthetic growth.

It is found in the cellular thylakoid membrane. The enzyme catalyses 2 a plastoquinone + 4 hnu + 2 H2O = 2 a plastoquinol + O2. Functionally, photosystem II (PSII) is a light-driven water:plastoquinone oxidoreductase that uses light energy to abstract electrons from H(2)O, generating O(2) and a proton gradient subsequently used for ATP formation. It consists of a core antenna complex that captures photons, and an electron transfer chain that converts photonic excitation into a charge separation. The D1/D2 (PsbA/PsbD) reaction center heterodimer binds P680, the primary electron donor of PSII as well as several subsequent electron acceptors. In Synechococcus sp. (strain CC9311), this protein is Photosystem II protein D1 2.